A 533-amino-acid polypeptide reads, in one-letter code: MSFNPAAGLLGKLKKLWNDTKNDYLEWERSQQGQISESVVKNHSPSKRKRRPSKEPSLSPKRRKNILNDQKKDEESIPNAGTQSQNFTHLSASKIRISDEDRIKPLVDLNQDHSFDMAYLTPASAPPPRFRFVPPKSDAKSHSAPRSLEGVTSLSDSHFNSLEANLKAISKDSNNKAHNNRYDESSLTNPEFSILVERLKSIEENLQSLQERISHCERSVSLSPSFAPPSNVKSPVQQHRSFVSSSARAKKNWGRQSNSPNSNKKTDHAYPGASMNTERGLIQNLEDSDDIHEESSDTLEEPLLINELNRTSFLNSNNNLKLNEAEENQNLLNLRSPKSSGKADNLTIKSSSNIDKVTSNDLYLDNNLQSHFKVTESQPTNLGRKEYSNSPFSIRARKDAATTSSSFESYHNTQTIQSPMKFTKATPLKDNESASVDESKVNVLSENQSLQADTATLEQLTPIPKARWNQLANKHPSLSNSAASPPVSSPGLRRSHIPVHEGLKHTRDGVAETKDALAKLREKMQERLKNHTS.

Polar residues-rich tracts occupy residues 30–43 (SQQG…VKNH), 79–91 (NAGT…THLS), 231–247 (NVKS…SSSA), and 254–263 (GRQSNSPNSN). Disordered stretches follow at residues 30 to 92 (SQQG…HLSA) and 221 to 274 (SLSP…PGAS). Ser336 is subject to Phosphoserine. Residues 475 to 510 (HPSLSNSAASPPVSSPGLRRSHIPVHEGLKHTRDGV) form a disordered region. Positions 476-490 (PSLSNSAASPPVSSP) are enriched in low complexity. A compositionally biased stretch (basic and acidic residues) spans 498 to 510 (PVHEGLKHTRDGV).

It localises to the nucleus. This is an uncharacterized protein from Schizosaccharomyces pombe (strain 972 / ATCC 24843) (Fission yeast).